A 289-amino-acid polypeptide reads, in one-letter code: Glyceraldehyde-3-phosphate dehydrogenase (289 aa).

NAD(+) contacts are provided by aspartate 12 and arginine 57. Residues 128–130, threonine 159, 188–189, and arginine 211 each bind D-glyceraldehyde 3-phosphate; these read SCT and TG. Cysteine 129 serves as the catalytic Nucleophile.

Belongs to the glyceraldehyde-3-phosphate dehydrogenase family. In terms of assembly, homotetramer.

The protein resides in the cytoplasm. It catalyses the reaction D-glyceraldehyde 3-phosphate + phosphate + NAD(+) = (2R)-3-phospho-glyceroyl phosphate + NADH + H(+). The protein operates within carbohydrate degradation; glycolysis; pyruvate from D-glyceraldehyde 3-phosphate: step 1/5. The sequence is that of Glyceraldehyde-3-phosphate dehydrogenase (GPD) from Amanita muscaria (Fly agaric).